Consider the following 353-residue polypeptide: Guanine nucleotide-binding protein subunit alpha (353 aa).

Positions 1-26 are disordered; sequence MGCGMSVEEKEGKARNEEIENQLKRD. Residue glycine 2 is the site of N-myristoyl glycine attachment. Cysteine 3 carries S-palmitoyl cysteine lipidation. Residues 7-26 are compositionally biased toward basic and acidic residues; sequence VEEKEGKARNEEIENQLKRD. One can recognise a G-alpha domain in the interval 32-353; it reads NEIKMLLLGA…QENLRLCGLI (322 aa). A G1 motif region spans residues 35 to 48; that stretch reads KMLLLGAGESGKST. The GTP site is built by glutamate 43, serine 44, glycine 45, lysine 46, serine 47, threonine 48, aspartate 150, leucine 175, threonine 181, glycine 203, asparagine 269, lysine 270, aspartate 272, and alanine 325. Residue serine 47 coordinates Mg(2+). Residues 173 to 181 form a G2 motif region; that stretch reads DVLRSRVKT. Threonine 181 contacts Mg(2+). Residues 196 to 205 form a G3 motif region; that stretch reads YRMFDVGGQR. The tract at residues 265–272 is G4 motif; the sequence is ILFLNKID. The G5 motif stretch occupies residues 323 to 328; it reads TCATDT.

It belongs to the G-alpha family. G(q) subfamily. G proteins are composed of 3 units; alpha, beta and gamma. The alpha chain contains the guanine nucleotide binding site. Mg(2+) is required as a cofactor.

Guanine nucleotide-binding proteins (G proteins) are involved as modulators or transducers in various transmembrane signaling systems. This chain is Guanine nucleotide-binding protein subunit alpha (SSG-1), found in Sporothrix schenckii (strain ATCC 58251 / de Perez 2211183) (Rose-picker's disease fungus).